The chain runs to 128 residues: Fluoride-specific ion channel FluC 1 (128 aa).

Transmembrane regions (helical) follow at residues 10–30 (VAFF…AFSF), 32–52 (GTVI…YFFL), 59–79 (AWLT…FSSF), and 93–113 (FGAL…AWAG). Na(+) is bound by residues Gly-71 and Thr-74.

It belongs to the fluoride channel Fluc/FEX (TC 1.A.43) family.

It localises to the cell membrane. The catalysed reaction is fluoride(in) = fluoride(out). With respect to regulation, na(+) is not transported, but it plays an essential structural role and its presence is essential for fluoride channel function. In terms of biological role, fluoride-specific ion channel. Important for reducing fluoride concentration in the cell, thus reducing its toxicity. The sequence is that of Fluoride-specific ion channel FluC 1 from Lactobacillus delbrueckii subsp. bulgaricus (strain ATCC 11842 / DSM 20081 / BCRC 10696 / JCM 1002 / NBRC 13953 / NCIMB 11778 / NCTC 12712 / WDCM 00102 / Lb 14).